The sequence spans 144 residues: MIKLFFVLAIFSSIISYMNIDPMKSSFFLIFSLLFSMPIISMSMHIWFSYFICLLFLSGIFVILVYFSSLSKINVVKSYMSLFLLLISIIYFSPVSMEYTNYLGLSGFYYSIYWFIFSFILICLLFFMNFSSYFLNFSGALRKV.

The next 5 helical transmembrane spans lie at 1–21 (MIKL…MNID), 25–45 (SSFF…MSMH), 46–66 (IWFS…ILVY), 75–95 (VVKS…FSPV), and 108–128 (FYYS…LFFM).

Belongs to the complex I subunit 6 family.

Its subcellular location is the mitochondrion membrane. It catalyses the reaction a ubiquinone + NADH + 5 H(+)(in) = a ubiquinol + NAD(+) + 4 H(+)(out). Functionally, core subunit of the mitochondrial membrane respiratory chain NADH dehydrogenase (Complex I) that is believed to belong to the minimal assembly required for catalysis. Complex I functions in the transfer of electrons from NADH to the respiratory chain. The immediate electron acceptor for the enzyme is believed to be ubiquinone. The polypeptide is NADH-ubiquinone oxidoreductase chain 6 (nd6) (Caenorhabditis briggsae).